The following is a 342-amino-acid chain: Aspartate carbamoyltransferase catalytic subunit (342 aa).

Carbamoyl phosphate-binding residues include arginine 54 and threonine 55. Lysine 82 contacts L-aspartate. Carbamoyl phosphate is bound by residues arginine 104, histidine 134, and glutamine 137. L-aspartate contacts are provided by arginine 177 and arginine 232. The carbamoyl phosphate site is built by glycine 277 and proline 278.

It belongs to the aspartate/ornithine carbamoyltransferase superfamily. ATCase family. Heterododecamer (2C3:3R2) of six catalytic PyrB chains organized as two trimers (C3), and six regulatory PyrI chains organized as three dimers (R2).

The enzyme catalyses carbamoyl phosphate + L-aspartate = N-carbamoyl-L-aspartate + phosphate + H(+). It functions in the pathway pyrimidine metabolism; UMP biosynthesis via de novo pathway; (S)-dihydroorotate from bicarbonate: step 2/3. In terms of biological role, catalyzes the condensation of carbamoyl phosphate and aspartate to form carbamoyl aspartate and inorganic phosphate, the committed step in the de novo pyrimidine nucleotide biosynthesis pathway. The polypeptide is Aspartate carbamoyltransferase catalytic subunit (Pseudarthrobacter chlorophenolicus (strain ATCC 700700 / DSM 12829 / CIP 107037 / JCM 12360 / KCTC 9906 / NCIMB 13794 / A6) (Arthrobacter chlorophenolicus)).